The primary structure comprises 121 residues: Large ribosomal subunit protein eL18 (121 aa).

Belongs to the eukaryotic ribosomal protein eL18 family. Part of the 50S ribosomal subunit.

The sequence is that of Large ribosomal subunit protein eL18 from Thermococcus kodakarensis (strain ATCC BAA-918 / JCM 12380 / KOD1) (Pyrococcus kodakaraensis (strain KOD1)).